The chain runs to 657 residues: Sodium/glucose cotransporter 4 (657 aa).

Over 1 to 24 (MPASPEPVTATPEPEEVPAKFTLE) the chain is Extracellular. Residues 25 to 45 (AADIAVVVVYFVFVLAVGIWS) form a helical membrane-spanning segment. At 46-79 (SIRANRGTVGGYFLAGRSMTWWPIGASLMSSNVG) the chain is on the cytoplasmic side. Residues 80 to 100 (SGLFIGLAGTGAAGGLAVGGF) form a helical membrane-spanning segment. Topologically, residues 101 to 104 (EWNA) are extracellular. The helical transmembrane segment at 105–125 (AWVLIALGWIFVPVYISAGVV) threads the bilayer. The Cytoplasmic segment spans residues 126–147 (TMPEYLRKRFGGQRIRIYMSVL). Residues 148–168 (SLILYILTKISTDIFSGALFI) traverse the membrane as a helical segment. The Extracellular segment spans residues 169-180 (QVSLGWDLYLST). A helical membrane pass occupies residues 181–201 (VILLAVTALYTIAGGLTAVIY). The Cytoplasmic portion of the chain corresponds to 202-207 (TDALQT). The helical transmembrane segment at 208-228 (VIMVIGAFVLMFIAFDKVGWY) threads the bilayer. Over 229-265 (EGLLVQYEKAAPALTVPNTTCHLPRSDAFHIFRDPVT) the chain is Extracellular. The N-linked (GlcNAc...) asparagine glycan is linked to asparagine 246. Residues 266–286 (GDIPWPGLIFGLTVLATWVWC) form a helical membrane-spanning segment. The Cytoplasmic portion of the chain corresponds to 287–307 (TDQVIVQRSLSAKNLSHAKAG). The chain crosses the membrane as a helical span at residues 308–328 (SVLGGYLKVFPMFFVVMPGMI). Topologically, residues 329 to 373 (SRALYPDEVACVDPDECQKICGAKVGCSNIAYPKLVVELMPVGMR) are extracellular. A helical membrane pass occupies residues 374–396 (GLMIAVMMAALMSSLTSIFNSSS). The Cytoplasmic segment spans residues 397 to 417 (TLFTMDIWQRIRPRASEKELM). Residues 418-438 (VVGRVFILLLVALSIVWIPVI) traverse the membrane as a helical segment. Topologically, residues 439–451 (QTANSGQLFDYIQ) are extracellular. A helical transmembrane segment spans residues 452–472 (AITSFLSPPITTVFIMAIFWG). Residues 473 to 478 (RVNEQG) are Cytoplasmic-facing. The chain crosses the membrane as a helical span at residues 479–499 (AFWGLMVGLVVGMVRMIMEFV). The Extracellular segment spans residues 500–520 (YGTPSCGETDLRPSLLKDVHY). A helical membrane pass occupies residues 521 to 541 (LYFALILLALTVLIITAVSLC). Topologically, residues 542 to 636 (TAPIPEKHLV…SIEEDHMWKT (95 aa)) are cytoplasmic. A helical transmembrane segment spans residues 637-657 (VCNVNALILLTANVFLWGYFA).

The protein belongs to the sodium:solute symporter (SSF) (TC 2.A.21) family.

It localises to the membrane. Probable sodium-dependent sugar transporter. This Danio rerio (Zebrafish) protein is Sodium/glucose cotransporter 4 (slc5a9).